The sequence spans 601 residues: Elongation factor 4 (601 aa).

The 183-residue stretch at 2 to 184 (DLIRNFSIIA…EMIARVPPPT (183 aa)) folds into the tr-type G domain. GTP-binding positions include 14 to 19 (DHGKST) and 131 to 134 (NKID).

It belongs to the TRAFAC class translation factor GTPase superfamily. Classic translation factor GTPase family. LepA subfamily.

The protein localises to the cell inner membrane. The enzyme catalyses GTP + H2O = GDP + phosphate + H(+). Functionally, required for accurate and efficient protein synthesis under certain stress conditions. May act as a fidelity factor of the translation reaction, by catalyzing a one-codon backward translocation of tRNAs on improperly translocated ribosomes. Back-translocation proceeds from a post-translocation (POST) complex to a pre-translocation (PRE) complex, thus giving elongation factor G a second chance to translocate the tRNAs correctly. Binds to ribosomes in a GTP-dependent manner. The sequence is that of Elongation factor 4 from Polynucleobacter necessarius subsp. necessarius (strain STIR1).